A 337-amino-acid polypeptide reads, in one-letter code: Holliday junction branch migration complex subunit RuvB (337 aa).

The interval 1 to 180 (MTRLISADKS…FGVISRLEFY (180 aa)) is large ATPase domain (RuvB-L). Residues Leu19, Arg20, Gly61, Lys64, Thr65, Thr66, 127 to 129 (EDF), Arg170, Tyr180, and Arg217 each bind ATP. Thr65 provides a ligand contact to Mg(2+). A small ATPAse domain (RuvB-S) region spans residues 181–251 (THEELAFIIT…VADQALALLE (71 aa)). The interval 254–337 (DMGFDMMDRA…APEPPQGKLF (84 aa)) is head domain (RuvB-H). The DNA site is built by Arg309 and Arg314.

Belongs to the RuvB family. As to quaternary structure, homohexamer. Forms an RuvA(8)-RuvB(12)-Holliday junction (HJ) complex. HJ DNA is sandwiched between 2 RuvA tetramers; dsDNA enters through RuvA and exits via RuvB. An RuvB hexamer assembles on each DNA strand where it exits the tetramer. Each RuvB hexamer is contacted by two RuvA subunits (via domain III) on 2 adjacent RuvB subunits; this complex drives branch migration. In the full resolvosome a probable DNA-RuvA(4)-RuvB(12)-RuvC(2) complex forms which resolves the HJ.

The protein localises to the cytoplasm. The catalysed reaction is ATP + H2O = ADP + phosphate + H(+). Functionally, the RuvA-RuvB-RuvC complex processes Holliday junction (HJ) DNA during genetic recombination and DNA repair, while the RuvA-RuvB complex plays an important role in the rescue of blocked DNA replication forks via replication fork reversal (RFR). RuvA specifically binds to HJ cruciform DNA, conferring on it an open structure. The RuvB hexamer acts as an ATP-dependent pump, pulling dsDNA into and through the RuvAB complex. RuvB forms 2 homohexamers on either side of HJ DNA bound by 1 or 2 RuvA tetramers; 4 subunits per hexamer contact DNA at a time. Coordinated motions by a converter formed by DNA-disengaged RuvB subunits stimulates ATP hydrolysis and nucleotide exchange. Immobilization of the converter enables RuvB to convert the ATP-contained energy into a lever motion, pulling 2 nucleotides of DNA out of the RuvA tetramer per ATP hydrolyzed, thus driving DNA branch migration. The RuvB motors rotate together with the DNA substrate, which together with the progressing nucleotide cycle form the mechanistic basis for DNA recombination by continuous HJ branch migration. Branch migration allows RuvC to scan DNA until it finds its consensus sequence, where it cleaves and resolves cruciform DNA. The protein is Holliday junction branch migration complex subunit RuvB of Citrifermentans bemidjiense (strain ATCC BAA-1014 / DSM 16622 / JCM 12645 / Bem) (Geobacter bemidjiensis).